Reading from the N-terminus, the 658-residue chain is Secretin XcpQ (658 aa).

The first 34 residues, Met-1 to Ala-34, serve as a signal peptide directing secretion. Residues Ala-51–Pro-141 are N0. The tract at residues Asp-142–Gly-205 is N1. An N2 region spans residues Ser-206–Ala-279. The tract at residues Asn-280–Ala-365 is N3. The disordered stretch occupies residues Ser-302–Ser-322. A compositionally biased stretch (gly residues) spans Asn-307 to Arg-320. Residues Val-368 to Asp-606 are secretin. The tract at residues Ala-608 to Glu-658 is s domain.

The protein belongs to the bacterial secretin family. GSP D subfamily. In terms of assembly, forms a cylindrical channel with 15 subunits. The closed pentadecameric channel is 170 Angstroms long and 140 Angstroms in diameter.

It localises to the cell outer membrane. Its function is as follows. Involved in a type II secretion system (T2SS, formerly general secretion pathway, GSP) for the export of proteins. This subunit forms the outer membrane channel. Among its substrates are PrpL, elastase LasB, chitin binding protein D (CbpD), aminopeptidase PaAP, and metalloprotease ImpA. In Pseudomonas aeruginosa (strain ATCC 15692 / DSM 22644 / CIP 104116 / JCM 14847 / LMG 12228 / 1C / PRS 101 / PAO1), this protein is Secretin XcpQ.